Consider the following 194-residue polypeptide: Fe/S biogenesis protein NfuA (194 aa).

[4Fe-4S] cluster-binding residues include C152 and C155.

The protein belongs to the NfuA family. Homodimer. [4Fe-4S] cluster serves as cofactor.

Involved in iron-sulfur cluster biogenesis. Binds a 4Fe-4S cluster, can transfer this cluster to apoproteins, and thereby intervenes in the maturation of Fe/S proteins. Could also act as a scaffold/chaperone for damaged Fe/S proteins. The protein is Fe/S biogenesis protein NfuA of Pseudomonas fluorescens (strain Pf0-1).